Consider the following 225-residue polypeptide: F-box protein SKIP27 (225 aa).

In terms of domain architecture, F-box spans 121 to 169 (KSRLECLPQDLLIRVICGVDHEDLKSLKLVSKSIREASLVAKTLHFAYT).

In terms of assembly, part of a SCF (ASK-cullin-F-box) protein ligase complex. Interacts with SKP1A/ASK1 and SPK1B/ASK2.

Its subcellular location is the nucleus. Its pathway is protein modification; protein ubiquitination. Functionally, component of SCF(ASK-cullin-F-box) E3 ubiquitin ligase complexes, which may mediate the ubiquitination and subsequent proteasomal degradation of target proteins. The chain is F-box protein SKIP27 (SKIP27) from Arabidopsis thaliana (Mouse-ear cress).